The primary structure comprises 346 residues: MSKIFVDACLGKETPYTPVWMMRQAGRYLPEYMKVRAEAGNFLNLCHDPEKACEVTLQPVDIVGVDAAILFSDILVIPDEMGMDLSFVKGEGPKFSDPIKTQADVDRLIGGEEAAGKLTYVYDTIKLIKERLAEDKALIGFTGAPWTLATYMIEGQGTKTYNICKKMMYSDPELLHNILAKVTEVVKYYMEKQIEAGIDVVQIFDSWASAIEPGKYDEFSWKYMVEIADYLKSKYPDTPIIMFPKGIPAFIERGLVYGNFDVFGVDWGTPMALAKEKLGDQYVLQGNMEPCRLYSKEATTECVEAIQKVMGGKRHIFNLGHGILPDVPVENAKHFVNECHRVSGKK.

Residues 23–27 (RQAGR), D73, Y151, S206, and H321 contribute to the substrate site.

The protein belongs to the uroporphyrinogen decarboxylase family. As to quaternary structure, homodimer.

The protein localises to the cytoplasm. It carries out the reaction uroporphyrinogen III + 4 H(+) = coproporphyrinogen III + 4 CO2. It functions in the pathway porphyrin-containing compound metabolism; protoporphyrin-IX biosynthesis; coproporphyrinogen-III from 5-aminolevulinate: step 4/4. Catalyzes the decarboxylation of four acetate groups of uroporphyrinogen-III to yield coproporphyrinogen-III. The chain is Uroporphyrinogen decarboxylase from Sulfurovum sp. (strain NBC37-1).